A 1209-amino-acid polypeptide reads, in one-letter code: Protein FAM83H (1209 aa).

A DUF1669 region spans residues 1 to 286; it reads MARRSQSSSQ…LFAQSEPLVP (286 aa). The segment at 1–286 is mediates interaction with CSNK1A1 and is required for FAM83H activity in keratin cytoskeleton organization; sequence MARRSQSSSQ…LFAQSEPLVP (286 aa). 6 positions are modified to phosphoserine: S512, S513, S515, S522, S639, and S660. Disordered regions lie at residues 512–545, 615–664, and 735–760; these read SSAS…NLGQ, RDLL…FRSR, and KGPA…VVSQ. T749 carries the phosphothreonine modification. Phosphoserine occurs at positions 752, 778, 806, and 871. The tract at residues 829 to 1056 is disordered; it reads AQGRSLSPQG…EERGSRVRLA (228 aa). T873 carries the post-translational modification Phosphothreonine. Phosphoserine is present on residues S882, S893, S904, and S915. The segment covering 915–942 has biased composition (polar residues); that stretch reads SPTSGFPNRRGSPTTGLMEQKGSPTSTY. Residue T917 is modified to Phosphothreonine. S926 is modified (phosphoserine). T928 carries the phosphothreonine modification. 8 positions are modified to phosphoserine: S937, S948, S959, S970, S977, S1035, S1041, and S1057. T1072 is subject to Phosphothreonine. Disordered regions lie at residues 1076–1147 and 1174–1193; these read LEQI…EERD and EAGS…RDSK. S1080, S1098, and S1177 each carry phosphoserine.

It belongs to the FAM83 family. In terms of assembly, directly interacts (via DUF1669) with casein kinase isoforms CSNK1A1, CSNK1A1L, CSNK1D and CSNK1E. Interaction with CSNK1A1 recruits CSNK1A1 to keratin filaments. Interacts with KRT18 and probably other keratins. In terms of tissue distribution, expressed in tooth follicle, eye, liver and kidney.

The protein resides in the cytoplasm. Its subcellular location is the cytoskeleton. Functionally, may play a major role in the structural organization and calcification of developing enamel. May play a role in keratin cytoskeleton disassembly by recruiting CSNK1A1 to keratin filaments. Thereby, it may regulate epithelial cell migration. The polypeptide is Protein FAM83H (Mus musculus (Mouse)).